The sequence spans 124 residues: Large ribosomal subunit protein bL12 (124 aa).

The protein belongs to the bacterial ribosomal protein bL12 family. Homodimer. Part of the ribosomal stalk of the 50S ribosomal subunit. Forms a multimeric L10(L12)X complex, where L10 forms an elongated spine to which 2 to 4 L12 dimers bind in a sequential fashion. Binds GTP-bound translation factors.

Functionally, forms part of the ribosomal stalk which helps the ribosome interact with GTP-bound translation factors. Is thus essential for accurate translation. In Cereibacter sphaeroides (strain ATCC 17025 / ATH 2.4.3) (Rhodobacter sphaeroides), this protein is Large ribosomal subunit protein bL12.